Reading from the N-terminus, the 367-residue chain is MSPARTLESSPLPTTQTAIIQGEGGILSIHHNAPLPTLRPDRILVKVAYVAINPCDWKMADRFPTPGCVDGCDFSGTVVALGSDWAKTGRFKIGDRVCGGVHGSNPIDQSTGCFADYVSADAQFTFHVPEYMGMEDAAAVGGTGIGTLGLALKRSLGLPGSPRDPVPESESVQVLVYAASTSVGTLATQLLRMSGHKPIGVCSAKNFDMVKSYGAVKLFDYHSPTCAQDIRAYTKNTLAHILDPITEPKTTELCYAAMGRAGGKYCALEAFAEEFCTRRVVKPELVMGMAILGGRIALDYGYESEADPEKRVFGVSWYEEMQELLDSGRLRNHPVRSFPGGFEGIMKGLHLLKTKQVSGEKLIVQLG.

Residue 55-58 participates in NADP(+) binding; sequence CDWK. Residue 143-150 coordinates substrate; the sequence is TGIGTLGL. Residues 203–206, tyrosine 221, and 268–269 contribute to the NADP(+) site; these read SAKN and LE. 288-292 is a binding site for substrate; it reads GMAIL. 357-358 is an NADP(+) binding site; sequence VS.

It belongs to the zinc-containing alcohol dehydrogenase family. In terms of assembly, monomer.

It participates in mycotoxin biosynthesis. Trans-enoyl reductase; part of the gene cluster that mediates the biosynthesis of the cytotoxic leucine-containing cytochalasans, including aspochalasin C, aspochalasin E, TMC-169, flavichalasine F, aspergillin PZ, aspochalasin M and flavichalasine G. The first step in the pathway is catalyzed by the hybrid PKS-NRPS ffsA that utilizes 8 units of malonyl-CoA to iteratively assemble the octaketide chain before addition of L-leucine by the C-terminal NRPS modules. Because ffsA lacks a designated enoylreductase (ER) domain, the required activity is provided the enoyl reductase fssC. The methyltransferase (MT) domain of ffsA catalyzes the alpha-methylation at C10 and C14 using S-adenosyl-L-methionine as the methyl-donating cosubstrate. Reduction by the hydrolyase ffsE, followed by dehydration and intra-molecular Diels-Alder cyclization by the Diels-Alderase ffsF then yield the required isoindolone-fused macrocycle. A number of oxidative steps catalyzed by the tailoring cytochrome P450 monooxygenase ffsD, the FAD-linked oxidoreductase ffsJ and the short-chain dehydrogenase/reductase ffsI, are further required to afford the final products. The chain is Trans-enoyl reductase ffsC from Aspergillus flavipes.